The following is a 174-amino-acid chain: MDSKSGRSESAINIPESNSTKHKSTAVHTATKVAAVAPRGGGWRRGVSIFDFILRICALAAALAATATMGTTDQTLPFFTQIIQFQASYDDLPVFTFFVVANGIASGYLVLSLPFSIATIVRPHAAAIKLLLIIFDTQFNDFCQRVSGAVVASFVAAVILIFLVVLSAVAIRKH.

The disordered stretch occupies residues 1-25 (MDSKSGRSESAINIPESNSTKHKST). Topologically, residues 1-46 (MDSKSGRSESAINIPESNSTKHKSTAVHTATKVAAVAPRGGGWRRG) are cytoplasmic. The span at 8-18 (SESAINIPESN) shows a compositional bias: polar residues. Residues 47–67 (VSIFDFILRICALAAALAATA) traverse the membrane as a helical segment. The Extracellular segment spans residues 68 to 96 (TMGTTDQTLPFFTQIIQFQASYDDLPVFT). A helical membrane pass occupies residues 97 to 117 (FFVVANGIASGYLVLSLPFSI). The Cytoplasmic segment spans residues 118 to 119 (AT). The helical transmembrane segment at 120 to 139 (IVRPHAAAIKLLLIIFDTQF) threads the bilayer. The Extracellular portion of the chain corresponds to 140-150 (NDFCQRVSGAV). A helical membrane pass occupies residues 151-171 (VASFVAAVILIFLVVLSAVAI). The Cytoplasmic portion of the chain corresponds to 172–174 (RKH).

The protein belongs to the Casparian strip membrane proteins (CASP) family. In terms of assembly, homodimer and heterodimers.

The protein localises to the cell membrane. This Triphysaria pusilla (Dwarf owl's-clover) protein is CASP-like protein 1.